Consider the following 160-residue polypeptide: Ribosomal RNA large subunit methyltransferase H (160 aa).

Residues Leu-77, Gly-109, and 128–133 (FGRITL) contribute to the S-adenosyl-L-methionine site.

It belongs to the RNA methyltransferase RlmH family. In terms of assembly, homodimer.

It is found in the cytoplasm. The catalysed reaction is pseudouridine(1915) in 23S rRNA + S-adenosyl-L-methionine = N(3)-methylpseudouridine(1915) in 23S rRNA + S-adenosyl-L-homocysteine + H(+). Functionally, specifically methylates the pseudouridine at position 1915 (m3Psi1915) in 23S rRNA. The protein is Ribosomal RNA large subunit methyltransferase H of Oenococcus oeni (strain ATCC BAA-331 / PSU-1).